Consider the following 513-residue polypeptide: Serine/threonine-protein kinase ppk8 (513 aa).

A compositionally biased stretch (low complexity) spans 98 to 114 (LSSTLTSMSEESSSTES). Residues 98-120 (LSSTLTSMSEESSSTESKFATLN) form a disordered region. The 265-residue stretch at 241-505 (GKLNNVIGEG…ISGARSTTWM (265 aa)) folds into the Protein kinase domain. ATP-binding positions include 247 to 255 (IGEGASSFI) and Lys270. Asp364 functions as the Proton acceptor in the catalytic mechanism.

The protein belongs to the protein kinase superfamily. Ser/Thr protein kinase family.

It is found in the cytoplasm. The protein localises to the nucleus. The catalysed reaction is L-seryl-[protein] + ATP = O-phospho-L-seryl-[protein] + ADP + H(+). The enzyme catalyses L-threonyl-[protein] + ATP = O-phospho-L-threonyl-[protein] + ADP + H(+). The protein is Serine/threonine-protein kinase ppk8 (ppk8) of Schizosaccharomyces pombe (strain 972 / ATCC 24843) (Fission yeast).